We begin with the raw amino-acid sequence, 484 residues long: Glutamyl-tRNA(Gln) amidotransferase subunit A (484 aa).

Catalysis depends on charge relay system residues Lys-76 and Ser-151. The active-site Acyl-ester intermediate is the Ser-175.

This sequence belongs to the amidase family. GatA subfamily. As to quaternary structure, heterotrimer of A, B and C subunits.

It catalyses the reaction L-glutamyl-tRNA(Gln) + L-glutamine + ATP + H2O = L-glutaminyl-tRNA(Gln) + L-glutamate + ADP + phosphate + H(+). Its function is as follows. Allows the formation of correctly charged Gln-tRNA(Gln) through the transamidation of misacylated Glu-tRNA(Gln) in organisms which lack glutaminyl-tRNA synthetase. The reaction takes place in the presence of glutamine and ATP through an activated gamma-phospho-Glu-tRNA(Gln). This is Glutamyl-tRNA(Gln) amidotransferase subunit A from Saccharophagus degradans (strain 2-40 / ATCC 43961 / DSM 17024).